The following is a 129-amino-acid chain: Small ribosomal subunit protein uS11 (129 aa).

Belongs to the universal ribosomal protein uS11 family. In terms of assembly, part of the 30S ribosomal subunit. Interacts with proteins S7 and S18. Binds to IF-3.

In terms of biological role, located on the platform of the 30S subunit, it bridges several disparate RNA helices of the 16S rRNA. Forms part of the Shine-Dalgarno cleft in the 70S ribosome. This Enterobacter sp. (strain 638) protein is Small ribosomal subunit protein uS11.